Here is a 1207-residue protein sequence, read N- to C-terminus: AP-3 complex subunit delta-1 (1207 aa).

An N-acetylalanine modification is found at Ala2. HEAT repeat units follow at residues 34-71 (KYIS…LGYD), 142-179 (DLAR…KYPE), 180-216 (SLRP…RNPK), 218-254 (YLSL…LEPR), 257-296 (KKLI…GMPN), 298-336 (SASI…THPK), 337-373 (SVQA…KKNL), 375-409 (EIVK…QSNY), and 521-558 (VYVQ…ERLP). 2 disordered regions span residues 630-695 (PLSD…RYQD) and 731-970 (RRHR…EEPL). Ser632, Ser634, and Ser636 each carry phosphoserine. A compositionally biased stretch (basic and acidic residues) spans 648-675 (EEQRHTKPRAPEADEQELARRREARRQE). A coiled-coil region spans residues 659–679 (EADEQELARRREARRQEQANN). Ser688 carries the post-translational modification Phosphoserine. The stretch at 725–752 (VKLEEERRHRQRLEKDKRKKKKRERERR) forms a coiled coil. Residues 731–740 (RRHRQRLEKD) show a composition bias toward basic and acidic residues. Over residues 741-759 (KRKKKKRERERRGTRRHSS) the composition is skewed to basic residues. A phosphoserine mark is found at Ser758 and Ser759. Phosphothreonine is present on Thr762. Ser764, Ser788, and Ser829 each carry phosphoserine. The span at 777–794 (VTEEMPENALPSDEDDKD) shows a compositional bias: acidic residues. The segment covering 795–840 (PNDPYRALDIDLDKPLADSEKLPVQKHRNAETSKSPEKEDVPLVEK) has biased composition (basic and acidic residues). A compositionally biased stretch (basic residues) spans 841-854 (KSKKPKKKEKKHKE). Residues 846 to 870 (KKKEKKHKEKEREKKKKEVEKGEDL) are a coiled coil. Composition is skewed to basic and acidic residues over residues 855-869 (KERE…KGED) and 899-908 (EGQEEPRGEE). The segment covering 923–933 (PSKHKKKKHKK) has biased composition (basic residues). Positions 952–969 (ADEEAAEPVENGTLEEEP) are enriched in acidic residues.

It belongs to the adaptor complexes large subunit family. In terms of assembly, AP-3 associates with the BLOC-1 complex. Adaptor protein complex 3 (AP-3) is a heterotetramer composed of two large adaptins (delta-type subunit AP3D1 and beta-type subunit AP3B1 or AP3B2), a medium adaptin (mu-type subunit AP3M1 or AP3M2) and a small adaptin (sigma-type subunit APS1 or AP3S2). Interacts with SLC30A2. Interacts with CLN3 (via dileucine motif); this interaction facilitates lysosomal targeting.

The protein resides in the cytoplasm. Its subcellular location is the golgi apparatus membrane. Functionally, part of the AP-3 complex, an adaptor-related complex which is not clathrin-associated. The complex is associated with the Golgi region as well as more peripheral structures. It facilitates the budding of vesicles from the Golgi membrane and may be directly involved in trafficking to lysosomes. Involved in process of CD8+ T-cell and NK cell degranulation. In concert with the BLOC-1 complex, AP-3 is required to target cargos into vesicles assembled at cell bodies for delivery into neurites and nerve terminals. The polypeptide is AP-3 complex subunit delta-1 (AP3D1) (Bos taurus (Bovine)).